A 181-amino-acid polypeptide reads, in one-letter code: Translationally-controlled tumor protein homolog (181 aa).

A TCTP domain is found at 1–181 (MLIFKDAFTD…VKEALVEEKQ (181 aa)).

It belongs to the TCTP family.

The protein localises to the cytoplasm. In terms of biological role, involved in calcium binding and microtubule stabilization. The protein is Translationally-controlled tumor protein homolog of Wuchereria bancrofti.